A 180-amino-acid polypeptide reads, in one-letter code: MTLKELAIGCGTTLRSIWMIGMQAFNKRETRMYPDVPVNPPPRFRGRIVLTRDPDGDERCVACNLCAVACPVDCISLQKAETKDGRWYPEFFRINFSRCIFCGLCEEACPTTAIQLTPDFEMGEFKRQDLVYEKDDLLISGPGKYPEYNFYRMAGMAIAGKDKGEAENEAKPIDVKGLLP.

2 consecutive 4Fe-4S ferredoxin-type domains span residues 48-80 (IVLT…LQKA) and 90-119 (EFFR…LTPD). Cys60, Cys63, Cys66, Cys70, Cys99, Cys102, Cys105, and Cys109 together coordinate [4Fe-4S] cluster.

It belongs to the complex I 23 kDa subunit family. NDH-1 is composed of 13 different subunits. Subunits NuoA, H, J, K, L, M, N constitute the membrane sector of the complex. Requires [4Fe-4S] cluster as cofactor.

The protein resides in the cell inner membrane. It catalyses the reaction a quinone + NADH + 5 H(+)(in) = a quinol + NAD(+) + 4 H(+)(out). In terms of biological role, NDH-1 shuttles electrons from NADH, via FMN and iron-sulfur (Fe-S) centers, to quinones in the respiratory chain. The immediate electron acceptor for the enzyme in this species is believed to be ubiquinone. Couples the redox reaction to proton translocation (for every two electrons transferred, four hydrogen ions are translocated across the cytoplasmic membrane), and thus conserves the redox energy in a proton gradient. This is NADH-quinone oxidoreductase subunit I from Sodalis glossinidius (strain morsitans).